Reading from the N-terminus, the 132-residue chain is Ribosome-binding factor A (132 aa).

This sequence belongs to the RbfA family. In terms of assembly, monomer. Binds 30S ribosomal subunits, but not 50S ribosomal subunits or 70S ribosomes.

It localises to the cytoplasm. Its function is as follows. One of several proteins that assist in the late maturation steps of the functional core of the 30S ribosomal subunit. Associates with free 30S ribosomal subunits (but not with 30S subunits that are part of 70S ribosomes or polysomes). Required for efficient processing of 16S rRNA. May interact with the 5'-terminal helix region of 16S rRNA. The chain is Ribosome-binding factor A from Burkholderia vietnamiensis (strain G4 / LMG 22486) (Burkholderia cepacia (strain R1808)).